A 1002-amino-acid polypeptide reads, in one-letter code: MAAHEWDWFQREELIGQISDIRVQNLQVERENVQKRTFTRWINLHLEKCNPPLEVKDLFVDIQDGKILMALLEVLSGRNLLHEYKSSSHRIFRLNNIAKALKFLEDSNVKLVSIDAAEIADGNPSLVLGLIWNIILFFQIKELTGNLSRNSPSSSLSPGSGGTDSDSSFPPTPTAERSVAISVKDQRKAIKALLAWVQRKTRKYGVAVQDFAGSWRSGLAFLAVIKAIDPSLVDMKQALENSTRENLEKAFSIAQDALHIPRLLEPEDIMVDTPDEQSIMTYVAQFLERFPELEAEDIFDSDKEVPIESTFVRIKETPSEQESKVFVLTENGERTYTVNHETSHPPPSKVFVCDKPESMKEFRLDGVSSHALSDSSTEFMHQIIDQVLQGGPGKTSDISEPSPESSILSSRKENGRSNSLPIKKTVHFEADTYKDPFCSKNLSLCFEGSPRVAKESLRQDGHVLAVEVAEEKEQKQESSKIPESSSDKVAGDIFLVEGTNNNSQSSSCNGALESTARHDEESHSLSPPGENTVMADSFQIKVNLMTVEALEEGDYFEAIPLKASKFNSDLIDFASTSQAFNKVPSPHETKPDEDAEAFENHAEKLGKRSIKSAHKKKDSPEPQVKMDKHEPHQDSGEEAEGCPSAPEETPVDKKPEVHEKAKRKSTRPHYEEEGEDDDLQGVGEELSSSPPSSCVSLETLGSHSEEGLDFKPSPPLSKVSVIPHDLFYFPHYEVPLAAVLEAYVEDPEDLKNEEMDLEEPEGYMPDLDSREEEADGSQSSSSSSVPGESLPSASDQVLYLSRGGVGTTPASEPAPLAPHEDHQQRETKENDPMDSHQSQESPNLENIANPLEENVTKESISSKKKEKRKHVDHVESSLFVAPGSVQSSDDLEEDSSDYSIPSRTSHSDSSIYLRRHTHRSSESDHFSYVQLRNAADLDDRRNRILTRKANSSGEAMSLGSHSPQSDSLTQLVQQPDMMYFILFLWLLVYCLLLFPQLDVSRL.

The tract at residues 1–288 is actin-binding; it reads MAAHEWDWFQ…IMTYVAQFLE (288 aa). The region spanning 32–139 is the Calponin-homology (CH) 1 domain; that stretch reads NVQKRTFTRW…LIWNIILFFQ (108 aa). The segment covering 149 to 168 has biased composition (low complexity); it reads RNSPSSSLSPGSGGTDSDSS. Residues 149–180 are disordered; that stretch reads RNSPSSSLSPGSGGTDSDSSFPPTPTAERSVA. Residues 187-291 form the Calponin-homology (CH) 2 domain; the sequence is RKAIKALLAW…YVAQFLERFP (105 aa). Phosphoserine occurs at positions 301 and 402. Disordered stretches follow at residues 389-418, 500-532, 581-716, and 749-911; these read QGGP…GRSN, NNNS…GENT, NKVP…SPPL, and DLKN…DSSI. The segment covering 396 to 409 has biased composition (low complexity); sequence SDISEPSPESSILS. The span at 500–509 shows a compositional bias: polar residues; sequence NNNSQSSSCN. Over residues 585–606 the composition is skewed to basic and acidic residues; sequence SPHETKPDEDAEAFENHAEKLG. Residues 607–617 are compositionally biased toward basic residues; the sequence is KRSIKSAHKKK. Composition is skewed to basic and acidic residues over residues 618–635 and 650–659; these read DSPE…HQDS and PVDKKPEVHE. Ser-619 is modified (phosphoserine). The segment covering 681–697 has biased composition (low complexity); sequence GVGEELSSSPPSSCVSL. Thr-699 carries the post-translational modification Phosphothreonine. Phosphoserine is present on residues Ser-713 and Ser-769. Positions 776–794 are enriched in low complexity; that stretch reads GSQSSSSSSVPGESLPSAS. Residues 818 to 834 are compositionally biased toward basic and acidic residues; that stretch reads PHEDHQQRETKENDPMD. A compositionally biased stretch (polar residues) spans 835-846; that stretch reads SHQSQESPNLEN. Ser-838 and Ser-841 each carry phosphoserine. Over residues 854 to 863 the composition is skewed to basic and acidic residues; the sequence is NVTKESISSK. Over residues 898–910 the composition is skewed to polar residues; that stretch reads YSIPSRTSHSDSS. Ser-907 is subject to Phosphoserine. Residues 977-997 form a helical; Anchor for type IV membrane protein membrane-spanning segment; the sequence is MMYFILFLWLLVYCLLLFPQL.

As to expression, widely expressed at intermediate level.

The protein localises to the membrane. The protein is Calmin (CLMN) of Homo sapiens (Human).